The primary structure comprises 382 residues: Lipid-A-disaccharide synthase (382 aa).

Belongs to the LpxB family.

The enzyme catalyses 2-N,3-O-bis[(3R)-3-hydroxytetradecanoyl]-alpha-D-glucosaminyl 1-phosphate + UDP-2-N,3-O-bis[(3R)-3-hydroxytetradecanoyl]-alpha-D-glucosamine = lipid A disaccharide (E. coli) + UDP + H(+). It carries out the reaction a lipid X + a UDP-2-N,3-O-bis[(3R)-3-hydroxyacyl]-alpha-D-glucosamine = a lipid A disaccharide + UDP + H(+). It functions in the pathway glycolipid biosynthesis; lipid IV(A) biosynthesis; lipid IV(A) from (3R)-3-hydroxytetradecanoyl-[acyl-carrier-protein] and UDP-N-acetyl-alpha-D-glucosamine: step 5/6. Condensation of UDP-2,3-diacylglucosamine and 2,3-diacylglucosamine-1-phosphate to form lipid A disaccharide, a precursor of lipid A, a phosphorylated glycolipid that anchors the lipopolysaccharide to the outer membrane of the cell. The sequence is that of Lipid-A-disaccharide synthase from Escherichia coli (strain 55989 / EAEC).